Reading from the N-terminus, the 566-residue chain is Serine/threonine-protein kinase haspin homolog (566 aa).

The Protein kinase domain occupies 248–566 (LLNTKKIGEG…HCANYLFNLN (319 aa)). Residues 254–262 (IGEGAYGEV), Lys-282, 377–382 (KFAGSD), 418–423 (DLHLGN), and 456–458 (DYT) each bind ATP. Asp-418 serves as the catalytic Proton acceptor.

It belongs to the protein kinase superfamily. Ser/Thr protein kinase family. Haspin subfamily. Interacts with pds5 and vtd. Mg(2+) serves as cofactor.

It is found in the nucleus lamina. Its subcellular location is the chromosome. The protein resides in the cytoplasm. It localises to the cytoskeleton. The protein localises to the spindle. The enzyme catalyses L-seryl-[protein] + ATP = O-phospho-L-seryl-[protein] + ADP + H(+). The catalysed reaction is L-threonyl-[protein] + ATP = O-phospho-L-threonyl-[protein] + ADP + H(+). Functionally, serine/threonine-protein kinase that phosphorylates histone H3 at 'Thr-4' (H3T3ph) during mitosis and interphase. Function is essential for chromosome organization during mitosis and genome organization in interphase cells, thus playing a functional role in gene regulation. During mitosis, may act through H3T3ph to both position and modulate activation of AURKB and other components of the chromosomal passenger complex (CPC) at centromeres to ensure proper chromatid cohesion, metaphase alignment and normal progression through the cell cycle. During interphase, associates with the cohesion complex and mediates pds5 binding to chromatin to ensure correct sister chromatid cohesion, chromatin organization, and also functions with Pds5-cohesin to modify Polycomb-dependent homeotic transformations. Function during interphase is required for insulator activity, nuclear compaction, heterochromatin-induced position-effect variegation and PcG-mediated pairing-sensitive silencing. This is Serine/threonine-protein kinase haspin homolog from Drosophila melanogaster (Fruit fly).